The sequence spans 429 residues: GTPase Obg (429 aa).

The Obg domain maps to 1–158; sequence MFVDQVKIYV…RNVQLELKVL (158 aa). Positions 124 to 145 are disordered; sequence RGNKRFATPANPAPELSENGEP. The OBG-type G domain occupies 159–329; it reads ADVGLVGFPS…LLLAIADKLE (171 aa). Residues 165 to 172, 190 to 194, 212 to 215, 282 to 285, and 310 to 312 each bind GTP; these read GFPSVGKS, FTTIV, DLPG, NKMD, and SAV. Mg(2+) is bound by residues S172 and T192. Residues 351-429 form the OCT domain; that stretch reads KYVAEEPDFE…LLDYEFEFMD (79 aa).

Belongs to the TRAFAC class OBG-HflX-like GTPase superfamily. OBG GTPase family. Monomer. The cofactor is Mg(2+).

It is found in the cytoplasm. Functionally, an essential GTPase which binds GTP, GDP and possibly (p)ppGpp with moderate affinity, with high nucleotide exchange rates and a fairly low GTP hydrolysis rate. Plays a role in control of the cell cycle, stress response, ribosome biogenesis and in those bacteria that undergo differentiation, in morphogenesis control. The polypeptide is GTPase Obg (Listeria innocua serovar 6a (strain ATCC BAA-680 / CLIP 11262)).